The following is a 92-amino-acid chain: MGIKLINIGFGNIVSANRLIAIVSPESAPIKRIIQEARDRGMLIDATYGRRTRAVIITDSDHVILSAVQPETVAHRLSTKGEEDEISEVEAQ.

It belongs to the RemA family.

The protein is Putative regulatory protein CKL_1364 of Clostridium kluyveri (strain ATCC 8527 / DSM 555 / NBRC 12016 / NCIMB 10680 / K1).